Reading from the N-terminus, the 434-residue chain is 4-hydroxy-3-methylbut-2-en-1-yl diphosphate synthase (flavodoxin) (434 aa).

Positions 1–15 are enriched in polar residues; that stretch reads MQSEAQSPRSSQICS. The segment at 1–24 is disordered; the sequence is MQSEAQSPRSSQICSTEPVFGGHQ. 4 residues coordinate [4Fe-4S] cluster: cysteine 322, cysteine 325, cysteine 368, and glutamate 375.

This sequence belongs to the IspG family. [4Fe-4S] cluster serves as cofactor.

The catalysed reaction is (2E)-4-hydroxy-3-methylbut-2-enyl diphosphate + oxidized [flavodoxin] + H2O + 2 H(+) = 2-C-methyl-D-erythritol 2,4-cyclic diphosphate + reduced [flavodoxin]. The protein operates within isoprenoid biosynthesis; isopentenyl diphosphate biosynthesis via DXP pathway; isopentenyl diphosphate from 1-deoxy-D-xylulose 5-phosphate: step 5/6. Its function is as follows. Converts 2C-methyl-D-erythritol 2,4-cyclodiphosphate (ME-2,4cPP) into 1-hydroxy-2-methyl-2-(E)-butenyl 4-diphosphate. The polypeptide is 4-hydroxy-3-methylbut-2-en-1-yl diphosphate synthase (flavodoxin) (Burkholderia ambifaria (strain MC40-6)).